Here is a 104-residue protein sequence, read N- to C-terminus: Large ribosomal subunit protein uL24 (104 aa).

The protein belongs to the universal ribosomal protein uL24 family. As to quaternary structure, part of the 50S ribosomal subunit.

Its function is as follows. One of two assembly initiator proteins, it binds directly to the 5'-end of the 23S rRNA, where it nucleates assembly of the 50S subunit. In terms of biological role, one of the proteins that surrounds the polypeptide exit tunnel on the outside of the subunit. This Halothermothrix orenii (strain H 168 / OCM 544 / DSM 9562) protein is Large ribosomal subunit protein uL24.